Here is a 541-residue protein sequence, read N- to C-terminus: uncharacterized protein (541 aa).

Positions 1 to 55 form a signal peptide, tat-type signal; it reads MTKTVTRAGGASGPQQFQSGGETMKYEITRRRFLAASSAVLAAPAIVTMVRPARA. Residues 339–362 form a disordered region; sequence RRSPSGISSPRSNRQPKAEALSAR. The segment covering 341–351 has biased composition (low complexity); the sequence is SPSGISSPRSN. 4 helical membrane passes run 379-399, 420-440, 466-486, and 500-520; these read AIVW…MVFM, LPVL…AHSG, LVSA…GEIA, and VGYF…LAVA.

This sequence belongs to the bacterial solute-binding protein 7 family. Post-translationally, predicted to be exported by the Tat system. The position of the signal peptide cleavage has not been experimentally proven.

The protein localises to the cell membrane. This is an uncharacterized protein from Sinorhizobium fredii (strain NBRC 101917 / NGR234).